The chain runs to 178 residues: Caveolin-1 (178 aa).

At serine 2 the chain carries N-acetylserine. Residue serine 2 is modified to Phosphoserine. The segment at 2–94 (SGGKYVDSEG…WKASFTTFTV (93 aa)) is required for homooligomerization. The Cytoplasmic segment spans residues 2–104 (SGGKYVDSEG…TKYWFYRLLS (103 aa)). N6-acetyllysine; alternate is present on lysine 5. Lysine 5 is covalently cross-linked (Glycyl lysine isopeptide (Lys-Gly) (interchain with G-Cter in ubiquitin); alternate). Position 6 is a phosphotyrosine (tyrosine 6). Serine 9 carries the phosphoserine modification. Position 14 is a phosphotyrosine; by ABL1 (tyrosine 14). Residue tyrosine 25 is modified to Phosphotyrosine. Residues lysine 26 and lysine 30 each participate in a glycyl lysine isopeptide (Lys-Gly) (interchain with G-Cter in ubiquitin) cross-link. Serine 37 is subject to Phosphoserine. Residues lysine 39, lysine 47, and lysine 57 each participate in a glycyl lysine isopeptide (Lys-Gly) (interchain with G-Cter in ubiquitin) cross-link. The interval 82 to 94 (DGIWKASFTTFTV) is interaction with CAVIN3. Residues 105–125 (ALFGIPMALVWGIYFAILSFL) constitute an intramembrane region (helical). The Cytoplasmic segment spans residues 126–178 (HIWAVVPCIKSFLIEIQCISRVYSIYVHTVCDPLFEAVGKIFSNVRINLQKEI). The interval 131 to 142 (VPCIKSFLIEIQ) is interacts with SPRY1, SPRY2, SPRY3 and SPRY4. 3 S-palmitoyl cysteine lipidation sites follow: cysteine 133, cysteine 143, and cysteine 156. Residues 149-160 (SIYVHTVCDPLF) are interacts with SPRY1, SPRY2, and SPRY4. The interacts with SPRY1, SPRY2, SPRY3 and SPRY4 stretch occupies residues 167-178 (FSNVRINLQKEI).

This sequence belongs to the caveolin family. As to quaternary structure, homooligomer. Interacts with GLIPR2. Interacts with NOSTRIN. Interacts with SNAP25 and STX1A. Interacts (via the N-terminus) with DPP4; the interaction is direct. Interacts with CTNNB1, CDH1 and JUP. Interacts with PACSIN2; this interaction induces membrane tubulation. Interacts with SLC7A9. Interacts with BMX and BTK. Interacts with TGFBR1. Interacts with CAVIN3 (via leucine-zipper domain) in a cholesterol-sensitive manner. Interacts with CAVIN1. Interacts with EHD2 in a cholesterol-dependent manner. Forms a ternary complex with UBXN6 and VCP; mediates CAV1 targeting to lysosomes for degradation. Interacts with ABCG1; this interaction regulates ABCG1-mediated cholesterol efflux. Interacts with NEU3; this interaction enhances NEU3 sialidase activity within caveola. Interacts (via C-terminus) with SPRY1, SPRY2 (via C-terminus), SPRY3, and SPRY4. Interacts with IGFBP5; this interaction allows trafficking of IGFBP5 from the plasma membrane to the nucleus. In terms of processing, phosphorylated at Tyr-14 by ABL1 in response to oxidative stress. Post-translationally, ubiquitinated. Undergo monoubiquitination and multi- and/or polyubiquitination. Monoubiquitination of N-terminal lysines promotes integration in a ternary complex with UBXN6 and VCP which promotes oligomeric CAV1 targeting to lysosomes for degradation. Ubiquitinated by ZNRF1; leading to degradation and modulation of the TLR4-mediated immune response.

Its subcellular location is the golgi apparatus membrane. It is found in the cell membrane. The protein resides in the membrane. It localises to the caveola. The protein localises to the membrane raft. May act as a scaffolding protein within caveolar membranes. Forms a stable heterooligomeric complex with CAV2 that targets to lipid rafts and drives caveolae formation. Mediates the recruitment of CAVIN proteins (CAVIN1/2/3/4) to the caveolae. Interacts directly with G-protein alpha subunits and can functionally regulate their activity. Involved in the costimulatory signal essential for T-cell receptor (TCR)-mediated T-cell activation. Its binding to DPP4 induces T-cell proliferation and NF-kappa-B activation in a T-cell receptor/CD3-dependent manner. Recruits CTNNB1 to caveolar membranes and may regulate CTNNB1-mediated signaling through the Wnt pathway. Negatively regulates TGFB1-mediated activation of SMAD2/3 by mediating the internalization of TGFBR1 from membrane rafts leading to its subsequent degradation. Binds 20(S)-hydroxycholesterol (20(S)-OHC). The polypeptide is Caveolin-1 (CAV1) (Papio anubis (Olive baboon)).